The sequence spans 509 residues: Glycogen synthase (509 aa).

Lys-47 provides a ligand contact to ADP-alpha-D-glucose.

Belongs to the glycosyltransferase 1 family. Bacterial/plant glycogen synthase subfamily.

It catalyses the reaction [(1-&gt;4)-alpha-D-glucosyl](n) + ADP-alpha-D-glucose = [(1-&gt;4)-alpha-D-glucosyl](n+1) + ADP + H(+). The protein operates within glycan biosynthesis; glycogen biosynthesis. In terms of biological role, synthesizes alpha-1,4-glucan chains using ADP-glucose. This Xanthomonas oryzae pv. oryzae (strain PXO99A) protein is Glycogen synthase.